The chain runs to 213 residues: Thymidylate kinase (213 aa).

10–17 (GLEGAGKT) provides a ligand contact to ATP.

This sequence belongs to the thymidylate kinase family.

The enzyme catalyses dTMP + ATP = dTDP + ADP. Phosphorylation of dTMP to form dTDP in both de novo and salvage pathways of dTTP synthesis. In Escherichia fergusonii (strain ATCC 35469 / DSM 13698 / CCUG 18766 / IAM 14443 / JCM 21226 / LMG 7866 / NBRC 102419 / NCTC 12128 / CDC 0568-73), this protein is Thymidylate kinase.